A 1481-amino-acid polypeptide reads, in one-letter code: MIERGKFRSLTLVNWNGFFARTFDLDELVTTLSGGNGAGKSTTMAAFVTALIPDLTLLHFRNTTEAGATSGSRDKGLHGKLRAGVCYSTLDVVNSRHQRVIVGVRLQQVAGRDRKVDIKPFTIQGLPTAIQPTQILTEVVGERQARVLSLQELKESVEAMEGVQFKQFNSITDYHSLMFDLGVIPKRLRSSADRSKFYRLIEASLYGGISSAITRSLRDYLLPENSGVRKAFQDMEAALRENRMTLEAIRVTQSDRDLFKHLISEATSYVAADYMRHANERRIHLDGALVLRRELLASRKQLVTEQYRHVEMSRELAEQSGAESDLETDYQAASDHLSLVQTAMRQQEKIERYQSDLEELTYRLEEQNEVVAEASEQQADNEARAEAAELEVDELKSQLADYQQALDVQQTRAIQYQQALQALERARALCQLPELTADNAEDWLETFQAKEQEATEALLQLEQKLSVADAAHSQFEQAYQLVVSIAGQVSRSEAWQTARELLRDWPSQQHLAERVQPLRMRLSELEQRLRAQQDAERLLQEFCKRQGQAYQPEELEELQRELESTVEELSLSVSDAGERRMEMRQELEQIKLKIQELTARAPVWLAAQDALSQLSEQSGEALEDSRQVTECMQQLLERERETTVERDEVAAAKRAIDAQIERLSQPSGAEDSRMIALAERFGGVLLSEIYDDVTLDDAPYFSALYGPSRHGIVVPDLSLVRDQLAGLEDCPEDLYLIEGDPQSFDDSVFAVEELEKAVVVKIADRQWRYSRYPEVPLFGRAARENRLEALYQERDSLAERYATLSFDVQKTQRLHQAFSRFIGSHLAVAFDSDPEAEIRLLNTRRGEIERALNAHEERNQQQRQQFEQAKEGISALNRLIPLVSLLLDDTLADRVEEITEELTEAQEAARHIQKHGASLTKLEPLLAVLQSDPQQHEQLKENYAQAQNSQRQAKQQAFALVEVVQRRAHFGYTDSAGMLTENSDLNDKLRQRLEQAEAERTRAREQLRQYQAQFTQYNQVLASLKSSYDAKRDMLKELSQELVDIGVQADANAEARARTRRDELHAALSTNRSRRNQLEKQLTFCEAEMDSLQKKLRKLERDYHQIREQVVNAKAGWCAVMRMVKDNGVERRLHRRELAYMDGDELRSMSDKALGALRLAVADNEHLRDVLRMSEDPKRPERKIQFYIAVYQHLRERIRQDIIRTDDPVEAIEQMEIELGRLTEELTAREQKLAISSKSVSNIIRKTIQREQNRIRMLNQGLQAVSFGQVKSVRLNVNVREAHATLLDVLSEQQEQHQDLFNSNRLTFSEALAKLYQRLNPQMDMGQRLPQTIGEELLDYRNYLELEVEVNRGADGWLRAESGALSTGEAIGTGMSILVMVVQSWEEESRRLRGKDISPCRLLFLDEAARLDAKSIATLFELCERLEMQLIIAAPENISPEKGTTYKLVRKVFQNHEHVHVVGLRGFANEIPTLPSIPVEQ.

Residue 34 to 41 (GGNGAGKS) coordinates ATP. 5 coiled-coil regions span residues 338–480 (SLVQ…QAYQ), 509–604 (QHLA…APVW), 780–805 (RAAR…ATLS), 835–1116 (EAEI…AKAG), and 1210–1265 (EAIE…LQAV). Positions 666–783 (PSGAEDSRMI…EVPLFGRAAR (118 aa)) are flexible hinge.

This sequence belongs to the SMC family. MukB subfamily. Homodimerization via its hinge domain. Binds to DNA via its C-terminal region. Interacts, and probably forms a ternary complex, with MukE and MukF via its C-terminal region. The complex formation is stimulated by calcium or magnesium. Interacts with tubulin-related protein FtsZ.

It localises to the cytoplasm. The protein localises to the nucleoid. Plays a central role in chromosome condensation, segregation and cell cycle progression. Functions as a homodimer, which is essential for chromosome partition. Involved in negative DNA supercoiling in vivo, and by this means organize and compact chromosomes. May achieve or facilitate chromosome segregation by condensation DNA from both sides of a centrally located replisome during cell division. This Yersinia enterocolitica serotype O:8 / biotype 1B (strain NCTC 13174 / 8081) protein is Chromosome partition protein MukB.